The sequence spans 509 residues: Pituitary homeobox homolog Ptx1 (509 aa).

The segment covering 70-98 has biased composition (low complexity); sequence NGAGSAGSAESATTTSTALSSGSTGSSTV. Disordered regions lie at residues 70 to 125, 148 to 171, and 204 to 273; these read NGAG…SSVS, QDLV…PKHE, and LNNF…HFTS. A compositionally biased stretch (polar residues) spans 227 to 242; it reads RSVNETTIKTENISSS. The span at 243 to 258 shows a compositional bias: basic and acidic residues; it reads GHDEPMTTSGEEPKND. Positions 259–269 are enriched in basic residues; sequence KKNKRQRRQRT. Residues 262 to 322 constitute a DNA-binding region (homeobox); it reads KRQRRQRTHF…KNRRAKWRKR (61 aa). An OAR motif is present at residues 460–473; the sequence is SSIATLRLKAKQHA. The Nuclear localization signal signature appears at 464–470; the sequence is TLRLKAK.

The protein belongs to the paired homeobox family. Bicoid subfamily.

The protein resides in the nucleus. Appears to control physiological cell functions rather than pattern formation during embryogenesis. This is Pituitary homeobox homolog Ptx1 (Ptx1) from Drosophila melanogaster (Fruit fly).